The primary structure comprises 603 residues: DNA mismatch repair protein MutL (603 aa).

It belongs to the DNA mismatch repair MutL/HexB family.

This protein is involved in the repair of mismatches in DNA. It is required for dam-dependent methyl-directed DNA mismatch repair. May act as a 'molecular matchmaker', a protein that promotes the formation of a stable complex between two or more DNA-binding proteins in an ATP-dependent manner without itself being part of a final effector complex. The sequence is that of DNA mismatch repair protein MutL from Listeria monocytogenes serotype 4a (strain HCC23).